The primary structure comprises 70 residues: MPREIKDIKDFLLKARRKDAKSVEIKKNPENVKFKVRCSRFLYTLVITDKEKAEKLKQSLPPGLQVKEVK.

Belongs to the eukaryotic ribosomal protein eL38 family.

In Lonomia obliqua (Moth), this protein is Large ribosomal subunit protein eL38 (RpL38).